Consider the following 304-residue polypeptide: Putative S-adenosyl-L-methionine-dependent methyltransferase MMAR_1057 (304 aa).

Residues D130 and 159–160 (DL) contribute to the S-adenosyl-L-methionine site.

The protein belongs to the UPF0677 family.

In terms of biological role, exhibits S-adenosyl-L-methionine-dependent methyltransferase activity. This is Putative S-adenosyl-L-methionine-dependent methyltransferase MMAR_1057 from Mycobacterium marinum (strain ATCC BAA-535 / M).